Consider the following 115-residue polypeptide: Large ribosomal subunit protein bL19 (115 aa).

The protein belongs to the bacterial ribosomal protein bL19 family.

Its function is as follows. This protein is located at the 30S-50S ribosomal subunit interface and may play a role in the structure and function of the aminoacyl-tRNA binding site. The protein is Large ribosomal subunit protein bL19 of Streptococcus sanguinis (strain SK36).